The chain runs to 146 residues: Probable glycine cleavage system H protein 1, mitochondrial (146 aa).

A mitochondrion-targeting transit peptide spans 1–30 (MLKTLRFGTRAFGQNLNIAKRNFCTRYTND). The region spanning 41–123 (NYRLGITDFA…MGDGWIVEYK (83 aa)) is the Lipoyl-binding domain. Lysine 82 bears the N6-lipoyllysine mark.

The protein belongs to the GcvH family. In terms of assembly, the glycine cleavage system is composed of four proteins: P, T, L and H. It depends on (R)-lipoate as a cofactor.

The protein localises to the mitochondrion. Its function is as follows. The glycine cleavage system catalyzes the degradation of glycine. The H protein shuttles the methylamine group of glycine from the P protein to the T protein. The protein is Probable glycine cleavage system H protein 1, mitochondrial (gcvH1) of Dictyostelium discoideum (Social amoeba).